Here is a 291-residue protein sequence, read N- to C-terminus: Transmembrane protein 41B (291 aa).

Over residues 1-11 (MAKGRVADRSP) the composition is skewed to basic and acidic residues. The interval 1 to 43 (MAKGRVADRSPTEMLHSTPAGDRAVRTQGSAAPGSKDHLNEKP) is disordered. Residue Thr18 is modified to Phosphothreonine. Residue Ser35 is modified to Phosphoserine. 6 consecutive transmembrane segments (helical) span residues 52–72 (TSLL…FLVY), 109–129 (FYVQ…TFAI), 147–169 (LALF…LSYL), 197–217 (LINY…FINI), 225–245 (PLKV…FVAI), and 262–282 (SWSS…PAIF). Residues 140 to 251 (GFLYPFPLAL…FVAIKAGTTL (112 aa)) are VTT domain; required for its function in autophagy.

The protein belongs to the TMEM41 family. Interacts with VMP1. Interacts with COPA, COPB1, VDAC1 and ERLIN2. Interacts with ATG2A. Interacts with SURF4. As to expression, expressed in brain, spinal cord, kidney and first lumbar dorsal root ganglia during postnatal development. Expressed in motor neurons and proprioceptive neurons.

The protein localises to the endoplasmic reticulum membrane. It is found in the endomembrane system. The catalysed reaction is a 1,2-diacyl-sn-glycero-3-phospho-L-serine(in) = a 1,2-diacyl-sn-glycero-3-phospho-L-serine(out). The enzyme catalyses cholesterol(in) = cholesterol(out). It carries out the reaction a 1,2-diacyl-sn-glycero-3-phosphocholine(in) = a 1,2-diacyl-sn-glycero-3-phosphocholine(out). It catalyses the reaction a 1,2-diacyl-sn-glycero-3-phosphoethanolamine(in) = a 1,2-diacyl-sn-glycero-3-phosphoethanolamine(out). In terms of biological role, phospholipid scramblase involved in lipid homeostasis and membrane dynamics processes. Has phospholipid scramblase activity toward cholesterol and phosphatidylserine, as well as phosphatidylethanolamine and phosphatidylcholine. Required for autophagosome formation: participates in early stages of autophagosome biogenesis at the endoplasmic reticulum (ER) membrane by reequilibrating the leaflets of the ER as lipids are extracted by ATG2 (ATG2A or ATG2B) to mediate autophagosome assembly. In addition to autophagy, involved in other processes in which phospholipid scramblase activity is required. Required for normal motor neuron development. This chain is Transmembrane protein 41B, found in Mus musculus (Mouse).